Reading from the N-terminus, the 256-residue chain is MAFTLTNKNVIFVAGLGGIGLDTSKELVKRDLKNLVILDRIENPAAIAELKAINPKVTVTFYPYDVTVPIAETTKLLKTIFAKLTTVDVLINGAGILDDYQIERTIAVNYTGLVNTTTAILDFWDKRKGGPGGIICNIGSVTGFNAIYQVPVYSGTKAAVVNFTSSLAKLAPITGVTAYTVNPGITRTTLVHKFNSWLDVEPQVAEKLLAHPIQSSLACAENFVKAIELNENGAIWKLDLGTLEAIKWSKHWDSGI.

12–35 lines the NAD(+) pocket; sequence FVAGLGGIGLDTSKELVKRDLKNL. Serine 140 is a substrate binding site. The Proton acceptor role is filled by tyrosine 153.

It belongs to the short-chain dehydrogenases/reductases (SDR) family. As to quaternary structure, homodimer.

The enzyme catalyses a primary alcohol + NAD(+) = an aldehyde + NADH + H(+). It carries out the reaction a secondary alcohol + NAD(+) = a ketone + NADH + H(+). This chain is Alcohol dehydrogenase (Adh), found in Drosophila orena (Fruit fly).